The sequence spans 432 residues: Maltoporin (432 aa).

Residues 1–22 (MKKVSVIAAAVAATLAAGSAFA) form the signal peptide.

It belongs to the porin LamB (TC 1.B.3) family. As to quaternary structure, homotrimer formed of three 18-stranded antiparallel beta-barrels, containing three independent channels.

The protein localises to the cell outer membrane. It catalyses the reaction beta-maltose(in) = beta-maltose(out). Its function is as follows. Involved in the transport of maltose and maltodextrins. The polypeptide is Maltoporin (Vibrio parahaemolyticus serotype O3:K6 (strain RIMD 2210633)).